The following is a 278-amino-acid chain: tRNA (guanine-N(7)-)-methyltransferase (278 aa).

Residues 1–42 are disordered; the sequence is MRHDGPMHVQPGVGLQSDTSSSTGTGSGPADEPEAEKSAWGY. Glu106, Glu131, Asn160, and Asp183 together coordinate S-adenosyl-L-methionine. The active site involves Asp183. Residues Lys187, Asp219, and 256–259 contribute to the substrate site; that span reads TKYE.

The protein belongs to the class I-like SAM-binding methyltransferase superfamily. TrmB family.

The catalysed reaction is guanosine(46) in tRNA + S-adenosyl-L-methionine = N(7)-methylguanosine(46) in tRNA + S-adenosyl-L-homocysteine. The protein operates within tRNA modification; N(7)-methylguanine-tRNA biosynthesis. Its function is as follows. Catalyzes the formation of N(7)-methylguanine at position 46 (m7G46) in tRNA. In Mycobacterium ulcerans (strain Agy99), this protein is tRNA (guanine-N(7)-)-methyltransferase.